We begin with the raw amino-acid sequence, 744 residues long: Dolasta-1(15),8-diene synthase (744 aa).

Residues 1–344 (MASTMMNYQD…RRYNPAAPLP (344 aa)) are terpene cyclase. Residues aspartate 108 and aspartate 112 each contribute to the Mg(2+) site. Residues aspartate 108, aspartate 112, 198-201 (RHYD), 246-250 (SWDKE), and 336-337 (RY) each bind substrate. A DDXXD motif is present at residues 108–112 (DDLTD). A prenyltransferase region spans residues 345-744 (RREDIGKVNG…LHLITFQLKV (400 aa)). Positions 399–422 (YTTMTPAETSSDDKKKKAKASHET) are disordered. A compositionally biased stretch (basic and acidic residues) spans 409-422 (SDDKKKKAKASHET). Residues arginine 459 and histidine 488 each coordinate isopentenyl diphosphate. Aspartate 495 and aspartate 499 together coordinate Mg(2+). Residues 495-499 (DDVQD) carry the DDXXD motif. Position 504 (arginine 504) interacts with dimethylallyl diphosphate. Arginine 505 provides a ligand contact to isopentenyl diphosphate. Dimethylallyl diphosphate contacts are provided by lysine 581, threonine 582, and glutamine 617.

It in the N-terminal section; belongs to the terpene synthase family. In the C-terminal section; belongs to the FPP/GGPP synthase family. In terms of assembly, hexamer. Mg(2+) is required as a cofactor.

It carries out the reaction isopentenyl diphosphate + (2E,6E)-farnesyl diphosphate = (2E,6E,10E)-geranylgeranyl diphosphate + diphosphate. The enzyme catalyses (2E,6E,10E)-geranylgeranyl diphosphate = (5R,12R,14S)-dolasta-1(15),8-diene + diphosphate. The catalysed reaction is (2E,6E,10E)-geranylgeranyl diphosphate = delta-araneosene + diphosphate. Functionally, bifunctional terpene synthase involved in the biosynthesis of the diterpenes delta-araneosene and dolasta-1(15),8-diene. The C-terminal prenyltransferase domain of CgDS catalyzes formation of the universal precursor of diterpene, geranylgeranyl diphosphate (GGPP), whereas the N-terminal terpene cyclase domain catalyzes the cyclization of GGPP to the intermediate delta-araneosene that is further converted to dolasta-1(15),8-diene in a second cyclization event. In some cases the cyclization stops at the delta-araneosene stage. The chain is Dolasta-1(15),8-diene synthase from Colletotrichum gloeosporioides (Anthracnose fungus).